The sequence spans 656 residues: uncharacterized protein (656 aa).

2 disordered regions span residues 1 to 41 (MMAT…ESEG) and 60 to 88 (SNKVEKDSDSEQRGRKKETTGPNNYHNLE). Over residues 22 to 36 (SDSSDSGSDVSFFSV) the composition is skewed to low complexity. Ser-39 carries the phosphoserine modification. The span at 62-78 (KVEKDSDSEQRGRKKET) shows a compositional bias: basic and acidic residues.

The protein localises to the cytoplasm. It localises to the mitochondrion. This is an uncharacterized protein from Saccharomyces cerevisiae (strain ATCC 204508 / S288c) (Baker's yeast).